The primary structure comprises 172 residues: Adenine phosphoribosyltransferase (172 aa).

Belongs to the purine/pyrimidine phosphoribosyltransferase family. In terms of assembly, homodimer.

The protein localises to the cytoplasm. The catalysed reaction is AMP + diphosphate = 5-phospho-alpha-D-ribose 1-diphosphate + adenine. Its pathway is purine metabolism; AMP biosynthesis via salvage pathway; AMP from adenine: step 1/1. Catalyzes a salvage reaction resulting in the formation of AMP, that is energically less costly than de novo synthesis. This Methanococcus maripaludis (strain C5 / ATCC BAA-1333) protein is Adenine phosphoribosyltransferase.